The sequence spans 621 residues: KIF-binding protein (621 aa).

Ser178 is modified (phosphoserine).

The protein belongs to the KIF-binding protein family. In terms of assembly, interacts with KIF1B; positively regulates KIF1B microtubule motor activity. Interacts with STMN2.

The protein localises to the cytoplasm. Its subcellular location is the cytoskeleton. In terms of biological role, activator of KIF1B plus-end-directed microtubule motor activity. Required for organization of axonal microtubules, and axonal outgrowth and maintenance during peripheral and central nervous system development. This is KIF-binding protein (KIFBP) from Bos taurus (Bovine).